Reading from the N-terminus, the 474-residue chain is PRAME family member 17 (474 aa).

The LRR 1; degenerate repeat unit spans residues arginine 97–cysteine 124. Residues histidine 179–tyrosine 203 form an LRR 2; degenerate repeat. An LRR 3; degenerate repeat occupies proline 204–glutamine 230. The LRR 4; degenerate repeat unit spans residues methionine 231–cysteine 265. LRR repeat units lie at residues leucine 266 to leucine 291, lysine 292 to lysine 323, glutamate 324 to alanine 342, alanine 348 to arginine 375, and cysteine 376 to histidine 400.

The protein belongs to the PRAME family.

In Homo sapiens (Human), this protein is PRAME family member 17.